A 309-amino-acid chain; its full sequence is Gamma-hemolysin component A (309 aa).

The first 29 residues, 1–29, serve as a signal peptide directing secretion; the sequence is MIKNKILTATLAVGLIAPLANPFIEISKA.

Belongs to the aerolysin family. Toxicity requires sequential binding and synergistic association of a class S and a class F component which form heterooligomeric complexes. HlgA (class S) associates with HlgB (class F) thus forming an AB toxin in strains producing both gamma-hemolysins and leukocidins. HlgA and LukF-PV can also form a complex.

It is found in the secreted. Toxin that seems to act by forming pores in the membrane of the cell. Has a hemolytic and a leucotoxic activity. This is Gamma-hemolysin component A (hlgA) from Staphylococcus aureus (strain COL).